A 321-amino-acid chain; its full sequence is Putative ribose-phosphate pyrophosphokinase 2 (321 aa).

ATP contacts are provided by residues 43 to 45 (DGE) and 102 to 103 (RQ). Mg(2+) is bound by residues H136 and D176. D225 contributes to the D-ribose 5-phosphate binding site.

The protein belongs to the ribose-phosphate pyrophosphokinase family. Class I subfamily. As to quaternary structure, homohexamer. Mg(2+) serves as cofactor.

The protein resides in the cytoplasm. It carries out the reaction D-ribose 5-phosphate + ATP = 5-phospho-alpha-D-ribose 1-diphosphate + AMP + H(+). Its pathway is metabolic intermediate biosynthesis; 5-phospho-alpha-D-ribose 1-diphosphate biosynthesis; 5-phospho-alpha-D-ribose 1-diphosphate from D-ribose 5-phosphate (route I): step 1/1. Involved in the biosynthesis of the central metabolite phospho-alpha-D-ribosyl-1-pyrophosphate (PRPP) via the transfer of pyrophosphoryl group from ATP to 1-hydroxyl of ribose-5-phosphate (Rib-5-P). The protein is Putative ribose-phosphate pyrophosphokinase 2 of Lactiplantibacillus plantarum (strain ATCC BAA-793 / NCIMB 8826 / WCFS1) (Lactobacillus plantarum).